Consider the following 350-residue polypeptide: Protein-glutamate methylesterase/protein-glutamine glutaminase 1 (350 aa).

One can recognise a Response regulatory domain in the interval R6–E123. D57 carries the post-translational modification 4-aspartylphosphate. The CheB-type methylesterase domain maps to L159 to A350. Residues S171, H197, and D293 contribute to the active site.

It belongs to the CheB family. Post-translationally, phosphorylated by CheA. Phosphorylation of the N-terminal regulatory domain activates the methylesterase activity.

It is found in the cytoplasm. It carries out the reaction [protein]-L-glutamate 5-O-methyl ester + H2O = L-glutamyl-[protein] + methanol + H(+). The enzyme catalyses L-glutaminyl-[protein] + H2O = L-glutamyl-[protein] + NH4(+). Involved in chemotaxis. Part of a chemotaxis signal transduction system that modulates chemotaxis in response to various stimuli. Catalyzes the demethylation of specific methylglutamate residues introduced into the chemoreceptors (methyl-accepting chemotaxis proteins or MCP) by CheR. Also mediates the irreversible deamidation of specific glutamine residues to glutamic acid. The polypeptide is Protein-glutamate methylesterase/protein-glutamine glutaminase 1 (Dechloromonas aromatica (strain RCB)).